The chain runs to 378 residues: Glutamate 5-kinase (378 aa).

Position 21 (Lys-21) interacts with ATP. The substrate site is built by Ser-61, Asp-148, and Asn-160. Position 180–181 (180–181) interacts with ATP; the sequence is TD. The PUA domain occupies 286 to 364; that stretch reads RGTLVLDAGA…RRIEELLGYM (79 aa).

Belongs to the glutamate 5-kinase family.

Its subcellular location is the cytoplasm. It catalyses the reaction L-glutamate + ATP = L-glutamyl 5-phosphate + ADP. Its pathway is amino-acid biosynthesis; L-proline biosynthesis; L-glutamate 5-semialdehyde from L-glutamate: step 1/2. In terms of biological role, catalyzes the transfer of a phosphate group to glutamate to form L-glutamate 5-phosphate. The chain is Glutamate 5-kinase from Chromohalobacter salexigens (strain ATCC BAA-138 / DSM 3043 / CIP 106854 / NCIMB 13768 / 1H11).